A 373-amino-acid chain; its full sequence is Innexin shaking-B (373 aa).

Residues 1–21 (MLDIFRGLKSLVKISHVNTDS) lie on the Cytoplasmic side of the membrane. The chain crosses the membrane as a helical span at residues 22–42 (PVFRLHYSITVIILMSFSLIV). The Extracellular portion of the chain corresponds to 43-106 (TTRQYVGNPI…SAEATAADKK (64 aa)). The helical transmembrane segment at 107–127 (IYKYYQWVCFCLFFQAILFYT) threads the bilayer. Topologically, residues 128 to 176 (PRWLWKSWEGGKIHALMMDLDIGICSEIEKKQKKKLLLDYLWDNLRYHN) are cytoplasmic. A helical membrane pass occupies residues 177–199 (WWAYRYYVCEFLSLCNVIGQMFL). The Extracellular segment spans residues 200–268 (MNRFFDGEFM…ILPLNVVNEK (69 aa)). The chain crosses the membrane as a helical span at residues 269–289 (IYIFLWFWFIILTILTTLTIF). Topologically, residues 290 to 373 (YRIIIIFSPR…PGMKGEIQDA (84 aa)) are cytoplasmic.

This sequence belongs to the pannexin family. As to quaternary structure, monomer.

Its subcellular location is the cell membrane. It is found in the cell junction. It localises to the gap junction. Functionally, structural component of the gap junctions at electrical synapses in distal and mid-depth levels in the lamina. The protein is Innexin shaking-B of Anopheles gambiae (African malaria mosquito).